The sequence spans 673 residues: uncharacterized protein (673 aa).

The interval 1–95 is disordered; that stretch reads MLNGEKSALG…QSSAIADSIG (95 aa). Residues 13 to 40 are compositionally biased toward low complexity; sequence PSNSNSSSKLNAKSPNFIPSSSNIPRSS. The span at 42 to 60 shows a compositional bias: basic and acidic residues; the sequence is KTKEHSADRKPHRNSEKKT. The segment at 214–273 adopts an RING-type zinc-finger fold; it reads CPFCLEEKPVAARMSRCGHVYCFSCLLRFVETPTAAEVKAAETSGTKIVKCGHRSCPICW. Residues 649 to 673 form a disordered region; the sequence is SAPSKNSKNKKKKKLVLLSTGAAHR.

Its subcellular location is the cytoplasm. It is found in the nucleus. This is an uncharacterized protein from Schizosaccharomyces pombe (strain 972 / ATCC 24843) (Fission yeast).